A 385-amino-acid chain; its full sequence is Beta-lactamase (385 aa).

An N-terminal signal peptide occupies residues 1–20 (MKRLLAFCLLFFAALGQAKV). Catalysis depends on Ser-84, which acts as the Acyl-ester intermediate. Catalysis depends on Tyr-170, which acts as the Proton acceptor. Residue 335–337 (KTG) coordinates substrate.

Belongs to the class-C beta-lactamase family.

It is found in the periplasm. It carries out the reaction a beta-lactam + H2O = a substituted beta-amino acid. Its function is as follows. This protein is a serine beta-lactamase with a substrate specificity for cephalosporins. The polypeptide is Beta-lactamase (Lysobacter lactamgenus).